A 756-amino-acid chain; its full sequence is Xylosyl- and glucuronyltransferase LARGE1 (756 aa).

Over 1 to 10 (MLGICRGRRK) the chain is Cytoplasmic. The chain crosses the membrane as a helical; Signal-anchor for type II membrane protein span at residues 11 to 31 (FLAASLSLLCIPAITWIYLFS). The Lumenal portion of the chain corresponds to 32–756 (GSFEDGKPVS…LKYLTAENNS (725 aa)). Disordered regions lie at residues 43–69 (SPLESQAHSPRYTASSQRERESLEVRM) and 81–109 (RQLSLAQGRAPSHRRGNHSKTYSMEEGTG). Residues 44-58 (PLESQAHSPRYTASS) are compositionally biased toward polar residues. Positions 53-95 (RYTASSQRERESLEVRMREVEEENRALRRQLSLAQGRAPSHRR) form a coiled coil. A compositionally biased stretch (basic and acidic residues) spans 59–69 (QRERESLEVRM). Asn-97, Asn-122, and Asn-148 each carry an N-linked (GlcNAc...) asparagine glycan. A xylosyltransferase activity region spans residues 138 to 413 (IHVAIVCAGY…FLEYDGNLLR (276 aa)). 2 residues coordinate Mn(2+): Asp-242 and Asp-244. A glycan (N-linked (GlcNAc...) asparagine) is linked at Asn-272. Residues 414 to 756 (RELFGCPSEA…LKYLTAENNS (343 aa)) are glucuronyltransferase activity. Mn(2+)-binding residues include Asp-563 and Asp-565.

The protein in the C-terminal section; belongs to the glycosyltransferase 49 family. This sequence in the N-terminal section; belongs to the glycosyltransferase 8 family. As to quaternary structure, interacts with DAG1 (via the N-terminal domain of alpha-DAG1); the interaction increases binding of DAG1 to laminin. Interacts with B4GAT1. Requires Mn(2+) as cofactor. As to expression, ubiquitous. Highest expression in heart, brain and skeletal muscle.

Its subcellular location is the golgi apparatus membrane. The enzyme catalyses 3-O-[beta-D-GlcA-(1-&gt;3)-beta-D-Xyl-(1-&gt;4)-Rib-ol-P-Rib-ol-P-3-beta-D-GalNAc-(1-&gt;3)-beta-D-GlcNAc-(1-&gt;4)-(O-6-P-alpha-D-Man)]-Thr-[protein] + UDP-alpha-D-xylose = 3-O-[alpha-D-Xyl-(1-&gt;3)-beta-D-GlcA-(1-&gt;4)-beta-D-Xyl-(1-&gt;4)-Rib-ol-P-Rib-ol-P-3-beta-D-GalNAc-(1-&gt;3)-beta-D-GlcNAc-(1-&gt;4)-(O-6-P-alpha-D-Man)]-Thr-[protein] + UDP + H(+). It catalyses the reaction 3-O-{(1-&gt;[3)-alpha-D-Xyl-(1-&gt;3)-beta-D-GlcA-(1-&gt;](n)-4)-beta-D-Xyl-(1-&gt;4)-Rib-ol-P-Rib-ol-P-3-beta-D-GalNAc-(1-&gt;3)-beta-D-GlcNAc-(1-&gt;4)-O-6-P-alpha-D-Man}-L-Thr-[protein] + UDP-alpha-D-glucuronate = 3-O-{beta-D-GlcA-(1-&gt;[3)-alpha-D-Xyl-(1-&gt;3)-beta-D-GlcA-(1-&gt;](n)-4)-beta-D-Xyl-(1-&gt;4)-Rib-ol-P-Rib-ol-P-3-beta-D-GalNAc-(1-&gt;3)-beta-D-GlcNAc-(1-&gt;4)-O-6-P-alpha-D-Man}-L-Thr-[protein] + UDP + H(+). It carries out the reaction 3-O-{beta-D-GlcA-(1-&gt;[3)-alpha-D-Xyl-(1-&gt;3)-beta-D-GlcA-(1-&gt;](n)-4)-beta-D-Xyl-(1-&gt;4)-Rib-ol-P-Rib-ol-P-3-beta-D-GalNAc-(1-&gt;3)-beta-D-GlcNAc-(1-&gt;4)-O-6-P-alpha-D-Man}-L-Thr-[protein] + UDP-alpha-D-xylose = 3-O-{(1-&gt;[3)-alpha-D-Xyl-(1-&gt;3)-beta-D-GlcA-(1-&gt;](n+1)-4)-beta-D-Xyl-(1-&gt;4)-Rib-ol-P-Rib-ol-P-3-beta-D-GalNAc-(1-&gt;3)-beta-D-GlcNAc-(1-&gt;4)-O-6-P-alpha-D-Man}-L-Thr-[protein] + UDP + H(+). The protein operates within protein modification; protein glycosylation. Bifunctional glycosyltransferase with both alpha-1,3-xylosyltransferase and beta-1,3-glucuronyltransferase activities involved in the maturation of alpha-dystroglycan (DAG1) by glycosylation leading to DAG1 binding to laminin G-like domain-containing extracellular proteins with high affinity. Elongates the glucuronyl-beta-1,4-xylose-beta disaccharide primer structure initiated by B4GAT1 by adding repeating units [-3-Xylose-alpha-1,3-GlcA-beta-1-] to produce a heteropolysaccharide. Requires the phosphorylation of core M3 (O-mannosyl trisaccharide) by POMK to elongate the glucuronyl-beta-1,4-xylose-beta disaccharide primer. Plays a key role in skeletal muscle function and regeneration. The sequence is that of Xylosyl- and glucuronyltransferase LARGE1 from Homo sapiens (Human).